Here is a 449-residue protein sequence, read N- to C-terminus: F-box/LRR-repeat protein At3g60040 (449 aa).

Residues 12–64 (RDAISWLPDEVLGKILSLIPTKQAVSTSLLAKKWRTIFRLVDHLELDDSFSLQ) enclose the F-box domain. LRR repeat units follow at residues 161–188 (LTLGTQLCLGQLPSYVSLPSLKSLFIDT), 191–215 (FYDIEDLCCVLLAGCPVLEELSVHH), 216–237 (HDFIATPHTISSPTLKRLSVDY), 239–263 (CPDDVDSASHMSFDLPKLVYLEYSH), 287–312 (ERKVLRMDVTDLIIGIRNVQSLHLSP), and 340–365 (KNKRGWRLLANLLKQSTKLETLIVKD).

This Arabidopsis thaliana (Mouse-ear cress) protein is F-box/LRR-repeat protein At3g60040.